A 213-amino-acid chain; its full sequence is Small ribosomal subunit protein uS3 (213 aa).

The KH type-2 domain maps to 38 to 106 (IRSYIKKLLY…EFSLEVTEVR (69 aa)).

This sequence belongs to the universal ribosomal protein uS3 family. Part of the 30S ribosomal subunit. Forms a tight complex with proteins S10 and S14.

Its function is as follows. Binds the lower part of the 30S subunit head. Binds mRNA in the 70S ribosome, positioning it for translation. The chain is Small ribosomal subunit protein uS3 from Lawsonia intracellularis (strain PHE/MN1-00).